The following is a 446-amino-acid chain: Adenylosuccinate synthetase (446 aa).

GTP contacts are provided by residues 21 to 27 and 49 to 51; these read GDEGKGK and GHT. Catalysis depends on aspartate 22, which acts as the Proton acceptor. Mg(2+) contacts are provided by aspartate 22 and glycine 49. Residues 22-25, 47-50, threonine 141, arginine 155, glutamine 236, threonine 251, and arginine 319 contribute to the IMP site; these read DEGK and NAGH. Histidine 50 serves as the catalytic Proton donor. 315–321 is a substrate binding site; sequence VTTGRSR. Residues arginine 321, 347 to 349, and 429 to 431 each bind GTP; these read KLD and STS.

The protein belongs to the adenylosuccinate synthetase family. As to quaternary structure, homodimer. Mg(2+) is required as a cofactor.

It is found in the cytoplasm. The enzyme catalyses IMP + L-aspartate + GTP = N(6)-(1,2-dicarboxyethyl)-AMP + GDP + phosphate + 2 H(+). The protein operates within purine metabolism; AMP biosynthesis via de novo pathway; AMP from IMP: step 1/2. Its function is as follows. Plays an important role in the de novo pathway of purine nucleotide biosynthesis. Catalyzes the first committed step in the biosynthesis of AMP from IMP. This is Adenylosuccinate synthetase from Polaromonas naphthalenivorans (strain CJ2).